The primary structure comprises 433 residues: N-lysine methyltransferase SMYD2 (433 aa).

One can recognise an SET domain in the interval 7–241 (GGLERFCSAG…PGDEVFTSYI (235 aa)). 17–19 (KGR) provides a ligand contact to S-adenosyl-L-methionine. Positions 52, 55, 65, 68, 74, 78, 86, and 90 each coordinate Zn(2+). Residues 52–90 (CECCFARKEGLSKCGRCKQAFYCDVECQKEDWPLHKLEC) form an MYND-type zinc finger. Residues His137, 206–207 (NH), and 258–260 (YFF) contribute to the S-adenosyl-L-methionine site. Ser283 is modified (phosphoserine).

Belongs to the class V-like SAM-binding methyltransferase superfamily. In terms of assembly, interacts with RNA polymerase II and HELZ. Interacts with SIN3A and HDAC1. Interacts (via MYND-type zinc finger) with EPB41L3. Interacts (via SET domain) with p53/TP53. Interacts with RB1 and HSP90AA1.

Its subcellular location is the cytoplasm. The protein localises to the cytosol. It is found in the nucleus. It catalyses the reaction L-lysyl(4)-[histone H3] + 3 S-adenosyl-L-methionine = N(6),N(6),N(6)-trimethyl-L-lysyl(4)-[histone H3] + 3 S-adenosyl-L-homocysteine + 3 H(+). The catalysed reaction is L-lysyl-[protein] + S-adenosyl-L-methionine = N(6)-methyl-L-lysyl-[protein] + S-adenosyl-L-homocysteine + H(+). Functionally, protein-lysine N-methyltransferase that methylates both histones and non-histone proteins, including p53/TP53 and RB1. Specifically trimethylates histone H3 'Lys-4' (H3K4me3) in vivo. The activity requires interaction with HSP90alpha. Shows even higher methyltransferase activity on p53/TP53. Monomethylates 'Lys-370' of p53/TP53, leading to decreased DNA-binding activity and subsequent transcriptional regulation activity of p53/TP53. Monomethylates RB1 at 'Lys-860'. In Rattus norvegicus (Rat), this protein is N-lysine methyltransferase SMYD2 (Smyd2).